Consider the following 196-residue polypeptide: Putative 3-methyladenine DNA glycosylase (196 aa).

This sequence belongs to the DNA glycosylase MPG family.

This chain is Putative 3-methyladenine DNA glycosylase, found in Bacillus licheniformis (strain ATCC 14580 / DSM 13 / JCM 2505 / CCUG 7422 / NBRC 12200 / NCIMB 9375 / NCTC 10341 / NRRL NRS-1264 / Gibson 46).